A 619-amino-acid chain; its full sequence is MDELVKALERAGYLLTPSAYYLLVDHFKEGKFSLVELVKFAKSKGVFIIDGDLAYEFLQFLGLGVPQEIKESYISTGEEAEKTVESQETRASELEEGGVSQVSSGELQELKEESPEISTTEEEIGGLELVQSSISTGSEVEYNNGENGESVVVLDKYGYPILYAPEEIGEEKEYSKYEDVVIEWNPSVTPVQIEKNYEVKFDVRQVKLRPPKVKNGSGKEGEIIVEAYASLFKSRLSKLKRILRENPEISNVVDIGKLNYVSGDEEVTIIGLVNSKRETNRGLIFEVEDKTGIVKVFLPKDSEDYREAFKVLPDAVVAFKGFYSKKGIFFANKFYLPDVPLYRKQKPPLEEKVYAILISDIHVGSREFCEKAFLKFLEWLNGHVESKEEEEIVSRVKYLIIAGDVVDGIGIYPGQYSDLVIPDIFDQYEALANLLANVPEHITMFIGPGNHDAARPAIPQPEFYKEYAKPIYKLKNAIIISNPAVIRLHGRDFLIAHGRGIEDVVSFVPGLTHHKPGLPMVELLKMRHLAPTFGGKVPIAPDPEDLLVIEEVPDLVQMGHVHVYDAVVYRGVQLVNSATWQAQTEFQKMVNIVPTPAKVPVVDVESARVVKVLDFSGWC.

The interval 78-122 (EEAEKTVESQETRASELEEGGVSQVSSGELQELKEESPEISTTEE) is disordered. The span at 79-93 (EAEKTVESQETRASE) shows a compositional bias: basic and acidic residues.

This sequence belongs to the DNA polymerase delta/II small subunit family. Heterodimer of a large subunit and a small subunit.

It carries out the reaction DNA(n) + a 2'-deoxyribonucleoside 5'-triphosphate = DNA(n+1) + diphosphate. The enzyme catalyses Exonucleolytic cleavage in the 3'- to 5'-direction to yield nucleoside 5'-phosphates.. Its function is as follows. Possesses two activities: a DNA synthesis (polymerase) and an exonucleolytic activity that degrades single-stranded DNA in the 3' to 5' direction. Has a template-primer preference which is characteristic of a replicative DNA polymerase. The chain is DNA polymerase II small subunit (polB) from Pyrococcus abyssi (strain GE5 / Orsay).